We begin with the raw amino-acid sequence, 351 residues long: Homoserine O-acetyltransferase (351 aa).

One can recognise an AB hydrolase-1 domain in the interval 51–334 (VIWVLHALTG…IYGHDAFLIE (284 aa)). The active-site Nucleophile is Ser-146. Arg-212 serves as a coordination point for substrate. Residues Asp-299 and His-328 contribute to the active site. Asp-329 is a substrate binding site.

The protein belongs to the AB hydrolase superfamily. MetX family. In terms of assembly, homodimer.

It localises to the cytoplasm. The enzyme catalyses L-homoserine + acetyl-CoA = O-acetyl-L-homoserine + CoA. It functions in the pathway amino-acid biosynthesis; L-methionine biosynthesis via de novo pathway; O-acetyl-L-homoserine from L-homoserine: step 1/1. Transfers an acetyl group from acetyl-CoA to L-homoserine, forming acetyl-L-homoserine. This Cyclobacterium marinum (strain ATCC 25205 / DSM 745 / LMG 13164 / NCIMB 1802) (Flectobacillus marinus) protein is Homoserine O-acetyltransferase.